Reading from the N-terminus, the 272-residue chain is Small ribosomal subunit protein mS23 (272 aa).

The tract at residues 236-272 is disordered; that stretch reads AGATGGAKEESDPAILPELEVAESTSESAQPAEIRTG.

The protein belongs to the mitochondrion-specific ribosomal protein mS23 family. Component of the mitochondrial small ribosomal subunit.

It is found in the mitochondrion. The polypeptide is Small ribosomal subunit protein mS23 (RSM25) (Coccidioides immitis (strain RS) (Valley fever fungus)).